A 188-amino-acid chain; its full sequence is Ribosomal RNA small subunit methyltransferase G (188 aa).

S-adenosyl-L-methionine is bound by residues Gly69, Phe74, 119–120, and Arg134; that span reads VQ.

This sequence belongs to the methyltransferase superfamily. RNA methyltransferase RsmG family.

The protein localises to the cytoplasm. The enzyme catalyses guanosine(527) in 16S rRNA + S-adenosyl-L-methionine = N(7)-methylguanosine(527) in 16S rRNA + S-adenosyl-L-homocysteine. Specifically methylates the N7 position of guanine in position 527 of 16S rRNA. In Campylobacter jejuni (strain RM1221), this protein is Ribosomal RNA small subunit methyltransferase G.